Reading from the N-terminus, the 237-residue chain is CD63 antigen (237 aa).

Over 1 to 11 the chain is Cytoplasmic; the sequence is MAVEGGMKCVK. The chain crosses the membrane as a helical span at residues 12–32; sequence FLLYVLLLVFCACAVGLIAVG. Residues 33–51 lie on the Extracellular side of the membrane; that stretch reads VGTHLVLNQTITHGATPSF. An N-linked (GlcNAc...) asparagine glycan is attached at N40. The chain crosses the membrane as a helical span at residues 52–72; sequence LLPVVIIAVGAFLFLVAFVGC. Topologically, residues 73 to 81 are cytoplasmic; that stretch reads CGACKENYC. The chain crosses the membrane as a helical span at residues 82–102; it reads LMITFAIFLSLIMLVEVAAAI. Over 103 to 202 the chain is Extracellular; sequence AGYVFRDKVR…KIAAWLRKNV (100 aa). 3 N-linked (GlcNAc...) asparagine glycosylation sites follow: N130, N150, and N171. A helical transmembrane segment spans residues 203–223; sequence LVVAAAALGIAFVEILGIVLA. Topologically, residues 224–237 are cytoplasmic; the sequence is CCLVKSIRSGYEVM. The Lysosomal targeting motif signature appears at 233-237; the sequence is GYEVM.

This sequence belongs to the tetraspanin (TM4SF) family. Interacts with TIMP1 and ITGB1 and recruits TIMP1 to ITGB1. Interacts with CD9. Identified in a complex with CD9 and ITGB3. Interacts with PMEL. Interacts with KDR/VEGFR2; identified in a complex with ITGB1 and KDR/VEGFR2 and is required to recruit KDR to ITGB1 complexes. Interacts with SYT7. Palmitoylated at a low, basal level in unstimulated platelets. The level of palmitoylation increases when platelets are activated by thrombin (in vitro).

It is found in the cell membrane. The protein localises to the lysosome membrane. The protein resides in the late endosome membrane. Its subcellular location is the endosome. It localises to the multivesicular body. It is found in the melanosome. The protein localises to the secreted. The protein resides in the extracellular exosome. Its subcellular location is the cell surface. Its function is as follows. Functions as a cell surface receptor for TIMP1 and plays a role in the activation of cellular signaling cascades. Plays a role in the activation of ITGB1 and integrin signaling, leading to the activation of AKT, FAK/PTK2 and MAP kinases. Promotes cell survival, reorganization of the actin cytoskeleton, cell adhesion, spreading and migration, via its role in the activation of AKT and FAK/PTK2. Plays a role in VEGFA signaling via its role in regulating the internalization of KDR/VEGFR2. Plays a role in intracellular vesicular transport processes, and is required for normal trafficking of the PMEL luminal domain that is essential for the development and maturation of melanocytes. Plays a role in the adhesion of leukocytes onto endothelial cells via its role in the regulation of SELP trafficking. May play a role in mast cell degranulation in response to Ms4a2/FceRI stimulation, but not in mast cell degranulation in response to other stimuli. In Bos taurus (Bovine), this protein is CD63 antigen (CD63).